Consider the following 147-residue polypeptide: Putative 2'-deoxynucleoside 5'-phosphate N-hydrolase 1 (147 aa).

Residues 10–16 (YFCGSIR), tyrosine 25, histidine 42, glutamate 90, and 114–116 (SAM) each bind substrate.

The protein belongs to the 2'-deoxynucleoside 5'-phosphate N-hydrolase 1 family. In terms of assembly, monomer and homodimer.

It localises to the cytoplasm. The protein localises to the nucleus. It catalyses the reaction a pyrimidine 2'-deoxyribonucleoside 5'-phosphate + H2O = a pyrimidine nucleobase + 2-deoxy-D-ribose 5-phosphate. The catalysed reaction is a purine 2'-deoxyribonucleoside 5'-phosphate + H2O = a purine nucleobase + 2-deoxy-D-ribose 5-phosphate. In terms of biological role, catalyzes the cleavage of the N-glycosidic bond of deoxyribonucleoside 5'-monophosphates to yield deoxyribose 5-phosphate and a purine or pyrimidine base. The polypeptide is Putative 2'-deoxynucleoside 5'-phosphate N-hydrolase 1 (Nematostella vectensis (Starlet sea anemone)).